Reading from the N-terminus, the 185-residue chain is Large ribosomal subunit protein uL5 (185 aa).

It belongs to the universal ribosomal protein uL5 family. As to quaternary structure, part of the 50S ribosomal subunit; part of the 5S rRNA/L5/L18/L25 subcomplex. Contacts the 5S rRNA and the P site tRNA. Forms a bridge to the 30S subunit in the 70S ribosome.

This is one of the proteins that bind and probably mediate the attachment of the 5S RNA into the large ribosomal subunit, where it forms part of the central protuberance. In the 70S ribosome it contacts protein S13 of the 30S subunit (bridge B1b), connecting the 2 subunits; this bridge is implicated in subunit movement. Contacts the P site tRNA; the 5S rRNA and some of its associated proteins might help stabilize positioning of ribosome-bound tRNAs. This Caulobacter sp. (strain K31) protein is Large ribosomal subunit protein uL5.